The following is a 156-amino-acid chain: Rhombotin-1 (156 aa).

LIM zinc-binding domains lie at 22–84 (KGCA…LFGT) and 86–148 (GNCA…GQLN).

Expressed in the brain and not in the thymus.

It localises to the nucleus. May be involved in gene regulation within neural lineage cells potentially by direct DNA binding or by binding to other transcription factors. The chain is Rhombotin-1 (LMO1) from Bos taurus (Bovine).